The following is a 440-amino-acid chain: Mitochondrial translation factor 2 (440 aa).

A mitochondrion-targeting transit peptide spans 1-15 (MIRTSSILKNCNYRY).

The protein resides in the mitochondrion matrix. Its function is as follows. Required for the processing and/or for the stability of the CYTB and COX1 intron-containing pre-mRNAs and of the ATP6 transcript. Could be a stem-loop RNA-binding protein that plays a role in determining RNA stability. This is Mitochondrial translation factor 2 (MTF2) from Saccharomyces cerevisiae (strain ATCC 204508 / S288c) (Baker's yeast).